Reading from the N-terminus, the 442-residue chain is UDP-N-acetylmuramoylalanine--D-glutamate ligase (442 aa).

Residue 115-121 (GSNGKST) coordinates ATP.

Belongs to the MurCDEF family.

Its subcellular location is the cytoplasm. It carries out the reaction UDP-N-acetyl-alpha-D-muramoyl-L-alanine + D-glutamate + ATP = UDP-N-acetyl-alpha-D-muramoyl-L-alanyl-D-glutamate + ADP + phosphate + H(+). The protein operates within cell wall biogenesis; peptidoglycan biosynthesis. Functionally, cell wall formation. Catalyzes the addition of glutamate to the nucleotide precursor UDP-N-acetylmuramoyl-L-alanine (UMA). The polypeptide is UDP-N-acetylmuramoylalanine--D-glutamate ligase (Vibrio vulnificus (strain YJ016)).